The following is a 175-amino-acid chain: Large ribosomal subunit protein uL10 (175 aa).

Belongs to the universal ribosomal protein uL10 family. Part of the ribosomal stalk of the 50S ribosomal subunit. The N-terminus interacts with L11 and the large rRNA to form the base of the stalk. The C-terminus forms an elongated spine to which L12 dimers bind in a sequential fashion forming a multimeric L10(L12)X complex.

Functionally, forms part of the ribosomal stalk, playing a central role in the interaction of the ribosome with GTP-bound translation factors. The protein is Large ribosomal subunit protein uL10 of Prochlorococcus marinus (strain NATL1A).